We begin with the raw amino-acid sequence, 460 residues long: MSETEKPVQAAAAAAVAAAGTADVPAVEKDPETTQDKQQSATDNSTTKAPQDEKNKQTENPSTDAPPAAATAPTADPITSAQPPDVDAIEAQKDGQKKNGPGSENKPDETPVDTRPEYLSKNPALSEFFEKLASILKKADHNEMWGVTLKDSDDVPTVNVLIKFLRANEGNVKLAEEQLRKALEWRKKMNPLALAEKATYSSSKFQGLGYVANYKDQNQGKVVFTWNIYGSVKDANRTFGDVDEFIKWRVALMEMAVKDLKLSEATSVIDYSGEDPYQMIQVHDYQNVSFLRLNPTIKSATKQTIDVFSTAYPELLKEKFFVNVPALMGWVFTALKVFLSKNTIRKFHPITNGVNLAREFSFADELPKSYGGKADELAESARTVALRQDTPEPPPESAPPAQASPPTTETNGSAKEVAKTAAEDAKKAEAPVAADAPATISEPEKPAASSANETPSEVAK.

The tract at residues 1-118 is disordered; it reads MSETEKPVQA…ETPVDTRPEY (118 aa). The segment covering 8-25 has biased composition (low complexity); it reads VQAAAAAAVAAAGTADVP. Residues 26–35 are compositionally biased toward basic and acidic residues; that stretch reads AVEKDPETTQ. Residues 36–49 show a composition bias toward polar residues; sequence DKQQSATDNSTTKA. Low complexity predominate over residues 61–81; it reads PSTDAPPAAATAPTADPITSA. Positions 105-118 are enriched in basic and acidic residues; sequence NKPDETPVDTRPEY. The CRAL-TRIO domain occupies 198–378; the sequence is ATYSSSKFQG…SYGGKADELA (181 aa). Heme is bound by residues Tyr-229, Arg-249, His-283, Tyr-285, and Lys-319. Positions 386–460 are disordered; sequence LRQDTPEPPP…ANETPSEVAK (75 aa). The segment covering 399-410 has biased composition (low complexity); that stretch reads PPAQASPPTTET. Residues 416–429 are compositionally biased toward basic and acidic residues; sequence EVAKTAAEDAKKAE. Over residues 430 to 439 the composition is skewed to low complexity; sequence APVAADAPAT. The span at 449 to 460 shows a compositional bias: polar residues; sequence SSANETPSEVAK.

This sequence belongs to the SFH5 family. It depends on heme b as a cofactor.

It is found in the cytoplasm. The protein localises to the endoplasmic reticulum membrane. Its subcellular location is the microsome membrane. The catalysed reaction is a 1,2-diacyl-sn-glycero-3-phospho-(1D-myo-inositol)(in) = a 1,2-diacyl-sn-glycero-3-phospho-(1D-myo-inositol)(out). Its function is as follows. Non-classical phosphatidylinositol (PtdIns) transfer protein (PITP), which exhibits PtdIns-binding/transfer activity in the absence of detectable PtdCho-binding/transfer activity. Regulates PtdIns(4,5)P2 homeostasis at the plasma membrane. Heme-binding protein that may play a role in organic oxidant-induced stress responses. The sequence is that of Phosphatidylinositol transfer protein SFH5 (SFH5) from Ajellomyces capsulatus (strain NAm1 / WU24) (Darling's disease fungus).